The chain runs to 466 residues: Soluble pyridine nucleotide transhydrogenase (466 aa).

36–45 (ERYHNVGGGC) contacts FAD.

Belongs to the class-I pyridine nucleotide-disulfide oxidoreductase family. It depends on FAD as a cofactor.

It localises to the cytoplasm. The catalysed reaction is NAD(+) + NADPH = NADH + NADP(+). Its function is as follows. Conversion of NADPH, generated by peripheral catabolic pathways, to NADH, which can enter the respiratory chain for energy generation. The chain is Soluble pyridine nucleotide transhydrogenase from Citrobacter koseri (strain ATCC BAA-895 / CDC 4225-83 / SGSC4696).